The primary structure comprises 89 residues: Cell division topological specificity factor (89 aa).

The protein belongs to the MinE family.

Its function is as follows. Prevents the cell division inhibition by proteins MinC and MinD at internal division sites while permitting inhibition at polar sites. This ensures cell division at the proper site by restricting the formation of a division septum at the midpoint of the long axis of the cell. The polypeptide is Cell division topological specificity factor (Heliobacterium modesticaldum (strain ATCC 51547 / Ice1)).